The primary structure comprises 407 residues: Protein FAM53B (407 aa).

2 disordered regions span residues 204–286 (SSSM…RPSL) and 306–380 (ITGE…DTEP). 2 stretches are compositionally biased toward basic and acidic residues: residues 264-281 (LNEK…DTHK) and 327-339 (DAVD…HNLK). The Nuclear localization signal motif lies at 272 to 275 (KRRR). Residues 357–369 (ITEEVDWNCDDGT) are compositionally biased toward acidic residues.

Belongs to the FAM53 family. In terms of assembly, interacts with ctnnb1. In terms of tissue distribution, predominantly expressed in proliferating cells throughout embryonic development.

It is found in the nucleus. Its function is as follows. Acts as a regulator of Wnt signaling pathway by regulating beta-catenin (ctnnb1) nuclear localization. In Oryzias latipes (Japanese rice fish), this protein is Protein FAM53B.